We begin with the raw amino-acid sequence, 1500 residues long: Rho GTPase-activating protein 35 (1500 aa).

The tract at residues 1–266 is has GTPase activity, required for proper localization; the sequence is MMMARKQDVR…IPYFEALKQQ (266 aa). GTP-binding positions include lysine 28, 33-37, leucine 52, serine 56, 95-97, 201-203, and 229-231; these read IGKSC, EQT, KCD, and SAR. FF domains lie at 270-327, 368-422, 429-483, and 485-550; these read IATA…HIHR, KLLE…HLEK, RAEM…HQKQ, and IDKA…HIHF. Tyrosine 308 bears the Phosphotyrosine mark. Residue serine 589 is modified to Phosphoserine. The pG1 pseudoGTPase domain maps to 592–767; that stretch reads DPNIDRINLV…LLDSKRNLNL (176 aa). Residues serine 770 and serine 773 each carry the phosphoserine modification. The pG2 pseudoGTPase domain occupies 783 to 947; that stretch reads RIVMCLMCGD…FKDVVDKKNI (165 aa). Phosphoserine is present on residues serine 970, serine 975, serine 985, serine 1002, and serine 1073. Residues 970 to 989 are disordered; sequence SPRAGSPLCNSNLQDSEEDI. The interval 1058 to 1090 is disordered; it reads SYLDQGHRDGQRKSVSSSTWLPPDGFDPSDYAE. A Phosphotyrosine modification is found at tyrosine 1088. A Phosphotyrosine; by ABL2 and PTK6 modification is found at tyrosine 1106. Positions 1125–1142 are enriched in polar residues; the sequence is KAQSNGSGNGSDSEMDTS. The disordered stretch occupies residues 1125–1147; the sequence is KAQSNGSGNGSDSEMDTSSLERG. Phosphoserine is present on residues serine 1135, serine 1143, serine 1151, serine 1177, serine 1180, and serine 1222. The interval 1178–1208 is disordered; it reads VGSDDELGPIRKKEEDQASQGYKGDNAVIPY. A required for phospholipid binding and regulation of the substrate preference region spans residues 1214–1237; that stretch reads PRRRNILRSLRRNTKKPKPKPRPS. At threonine 1227 the chain carries Phosphothreonine. Serine 1237 is modified (phosphoserine). The 188-residue stretch at 1250 to 1437 folds into the Rho-GAP domain; the sequence is VPLTTVVTPE…LFIQQCPFFF (188 aa). Positions 1444–1500 are disordered; it reads EPPGATPSSPSAVASTVPFLTSTPVTSQPSPPQSPPPTPQSPMQALLPSQLQAEHTL. The segment covering 1449 to 1471 has biased composition (low complexity); it reads TPSSPSAVASTVPFLTSTPVTSQ. The span at 1472-1483 shows a compositional bias: pro residues; it reads PSPPQSPPPTPQ. Serine 1473 and serine 1477 each carry phosphoserine. Threonine 1481 is subject to Phosphothreonine. Serine 1484 carries the post-translational modification Phosphoserine. The segment covering 1490–1500 has biased composition (polar residues); sequence LPSQLQAEHTL.

Interacts with RASA1. Interacts with the general transcription factor GTF2I, the interaction sequesters GTF2I in the cytoplasm. Post-translationally, phosphorylation of Tyr-1106 by PTK6 promotes the association with RASA1, inactivating RHOA while activating RAS. Phosphorylation at Tyr-308 by PDGFRA inhibits binding to GTF2I. Phosphorylated by PRKCA at Ser-1222 and Thr-1227, induces relocalization from the cytoplasm to regions of plasma membrane ruffling and prevents the binding and substrate specificity regulation by phospholipids. In brain, phosphorylated by FYN and SRC. During focal adhesion formation, phosphorylated by MAPK1 and MAPK3 at the C-terminal region, probably at Ser-1452, Ser-1477, Thr-1481 and Ser-1484. Phosphorylation by MAPK1 and MAPK3 inhibits GAP function and localizes ARGHAP35 away from newly forming focal adhesions and stress fibers in cells spreading on fibronectin. Phosphorylation at Ser-1477 and Thr-1481 by GSK3B requires priming by MAPK and inhibits RhoGAP activity and modulates polarized cell migration. Strongly expressed in retina (photoreceptor layer) and brain. Expression is maximal in the occipital, frontal, temporal lobe and also the cerebellum. Medium expression in the medulla and also in kidney, lung, liver, heart and spleen.

It is found in the cytoplasm. Its subcellular location is the cytoskeleton. It localises to the cilium basal body. The protein localises to the nucleus. The protein resides in the cell membrane. In terms of biological role, rho GTPase-activating protein (GAP). Binds several acidic phospholipids which inhibits the Rho GAP activity to promote the Rac GAP activity. This binding is inhibited by phosphorylation by PRKCA. Involved in cell differentiation as well as cell adhesion and migration, plays an important role in retinal tissue morphogenesis, neural tube fusion, midline fusion of the cerebral hemispheres and mammary gland branching morphogenesis. Transduces signals from p21-ras to the nucleus, acting via the ras GTPase-activating protein (GAP). Transduces SRC-dependent signals from cell-surface adhesion molecules, such as laminin, to promote neurite outgrowth. Regulates axon outgrowth, guidance and fasciculation. Modulates Rho GTPase-dependent F-actin polymerization, organization and assembly, is involved in polarized cell migration and in the positive regulation of ciliogenesis and cilia elongation. During mammary gland development, is required in both the epithelial and stromal compartments for ductal outgrowth. Represses transcription of the glucocorticoid receptor by binding to the cis-acting regulatory sequence 5'-GAGAAAAGAAACTGGAGAAACTC-3'; this function is however unclear and would need additional experimental evidences. This is Rho GTPase-activating protein 35 from Canis lupus familiaris (Dog).